Consider the following 299-residue polypeptide: Acetaldehyde dehydrogenase (299 aa).

NAD(+) is bound at residue S11–I14. The active-site Acyl-thioester intermediate is C126. NAD(+) is bound by residues S157–N165 and N267.

Belongs to the acetaldehyde dehydrogenase family.

The enzyme catalyses acetaldehyde + NAD(+) + CoA = acetyl-CoA + NADH + H(+). This is Acetaldehyde dehydrogenase from Bacillus cereus (strain ATCC 10987 / NRS 248).